We begin with the raw amino-acid sequence, 254 residues long: Zinc import ATP-binding protein ZnuC (254 aa).

In terms of domain architecture, ABC transporter spans V5 to P219. ATP is bound at residue G37 to S44. Positions C233–P242 are enriched in basic and acidic residues. The interval C233–Q254 is disordered.

This sequence belongs to the ABC transporter superfamily. Zinc importer (TC 3.A.1.15.5) family. As to quaternary structure, the complex is composed of two ATP-binding proteins (ZnuC), two transmembrane proteins (ZnuB) and a solute-binding protein (ZnuA).

The protein resides in the cell inner membrane. The enzyme catalyses Zn(2+)(out) + ATP(in) + H2O(in) = Zn(2+)(in) + ADP(in) + phosphate(in) + H(+)(in). In terms of biological role, part of the ABC transporter complex ZnuABC involved in zinc import. Responsible for energy coupling to the transport system. This is Zinc import ATP-binding protein ZnuC from Aeromonas hydrophila subsp. hydrophila (strain ATCC 7966 / DSM 30187 / BCRC 13018 / CCUG 14551 / JCM 1027 / KCTC 2358 / NCIMB 9240 / NCTC 8049).